The sequence spans 87 residues: Beta-mammal toxin Css4 (87 aa).

An N-terminal signal peptide occupies residues 1-19; the sequence is MNSLLMITACLALVGTVWA. An LCN-type CS-alpha/beta domain is found at 20 to 85; that stretch reads KEGYLVNSYT…VWPLPNKTCN (66 aa). 4 disulfides stabilise this stretch: Cys31/Cys84, Cys35/Cys60, Cys44/Cys65, and Cys48/Cys67. Asn85 carries the asparagine amide modification.

This sequence belongs to the long (4 C-C) scorpion toxin superfamily. Sodium channel inhibitor family. Beta subfamily. In terms of tissue distribution, expressed by the venom gland.

The protein localises to the secreted. Its function is as follows. Beta toxins bind voltage-independently at site-4 of sodium channels (Nav) and shift the voltage of activation toward more negative potentials thereby affecting sodium channel activation and promoting spontaneous and repetitive firing. This toxin is active only on mammals. The sequence is that of Beta-mammal toxin Css4 from Centruroides suffusus (Durango bark scorpion).